Here is a 192-residue protein sequence, read N- to C-terminus: Sporulation initiation phosphotransferase B (192 aa).

Residue H30 is modified to Phosphohistidine.

Homodimer. Dimerization is essential for activity as both monomers contribute to the formation of the active site. Phosphorylated by spo0F.

It localises to the cytoplasm. Its function is as follows. Key element in the phosphorelay regulating sporulation initiation. Acts on spo0A. Mediates reversible phosphoryl transfer from spo0F to spo0A. The chain is Sporulation initiation phosphotransferase B (spo0B) from Bacillus subtilis (strain 168).